A 206-amino-acid chain; its full sequence is Large ribosomal subunit protein uL4 (206 aa).

Residues 45–78 (QGNRAQKDREQVKHTTKKPWRQKGTGRARAGMSS) form a disordered region. Residues 58–70 (HTTKKPWRQKGTG) show a composition bias toward basic residues.

The protein belongs to the universal ribosomal protein uL4 family. As to quaternary structure, part of the 50S ribosomal subunit.

In terms of biological role, one of the primary rRNA binding proteins, this protein initially binds near the 5'-end of the 23S rRNA. It is important during the early stages of 50S assembly. It makes multiple contacts with different domains of the 23S rRNA in the assembled 50S subunit and ribosome. Functionally, forms part of the polypeptide exit tunnel. The protein is Large ribosomal subunit protein uL4 of Burkholderia ambifaria (strain MC40-6).